The sequence spans 363 residues: Ribosomal RNA large subunit methyltransferase M (363 aa).

S-adenosyl-L-methionine is bound by residues Ser-194, 227 to 230, Asp-246, Asp-266, and Asp-284; that span reads CPGG. Lys-313 (proton acceptor) is an active-site residue.

The protein belongs to the class I-like SAM-binding methyltransferase superfamily. RNA methyltransferase RlmE family. RlmM subfamily. In terms of assembly, monomer.

Its subcellular location is the cytoplasm. The enzyme catalyses cytidine(2498) in 23S rRNA + S-adenosyl-L-methionine = 2'-O-methylcytidine(2498) in 23S rRNA + S-adenosyl-L-homocysteine + H(+). Catalyzes the 2'-O-methylation at nucleotide C2498 in 23S rRNA. This Mannheimia succiniciproducens (strain KCTC 0769BP / MBEL55E) protein is Ribosomal RNA large subunit methyltransferase M.